Reading from the N-terminus, the 372-residue chain is Cytochrome b (372 aa).

4 helical membrane passes run 25–45, 69–90, 105–125, and 170–190; these read FGSM…FLAI, WIMQ…YIHI, WLSG…GYVL, and FFAL…IHIM. The heme b site is built by His75 and His89. His174 and His188 together coordinate heme b. Position 193 (His193) interacts with a ubiquinone. The next 4 membrane-spanning stretches (helical) occupy residues 218–238, 280–300, 312–332, and 339–358; these read YKDM…LSFS, LGGT…PFTH, LSQI…WTAS, and FILI…IMAP.

The protein belongs to the cytochrome b family. As to quaternary structure, the cytochrome bc1 complex contains 3 respiratory subunits (MT-CYB, CYC1 and UQCRFS1), 2 core proteins (UQCRC1 and UQCRC2) and probably 6 low-molecular weight proteins. Requires heme b as cofactor.

It localises to the mitochondrion inner membrane. In terms of biological role, component of the ubiquinol-cytochrome c reductase complex (complex III or cytochrome b-c1 complex) that is part of the mitochondrial respiratory chain. The b-c1 complex mediates electron transfer from ubiquinol to cytochrome c. Contributes to the generation of a proton gradient across the mitochondrial membrane that is then used for ATP synthesis. This Hemachatus haemachatus (Rinkhals) protein is Cytochrome b (MT-CYB).